Consider the following 303-residue polypeptide: MSSARFDSSDRSAWYMGPVSRQEAQTRLQGQRHGMFLVRDSSTCPGDYVLSVSENSRVSHYIINSLPNRRFKIGDQEFDHLPALLEFYKIHYLDTTTLIEPAPRYPSPPMGSVSAPNLPTAEDNLEYVRTLYDFPGNDAEDLPFKKGEILVIIEKPEEQWWSARNKDGRVGMIPVPYVEKLVRSSPHGKHGNRNSNSYGIPEPAHAYAQPQTTTPLPAVSGSPGAAITPLPSTQNGPVFAKAIQKRVPCAYDKTALALEVGDIVKVTRMNINGQWEGEVNGRKGLFPFTHVKIFDPQNPDENE.

Residues 14-102 (WYMGPVSRQE…LDTTTLIEPA (89 aa)) form the SH2 domain. The region spanning 123–183 (DNLEYVRTLY…PVPYVEKLVR (61 aa)) is the SH3 1 domain. 2 positions are modified to phosphotyrosine: Tyr-127 and Tyr-207. The disordered stretch occupies residues 184 to 234 (SSPHGKHGNRNSNSYGIPEPAHAYAQPQTTTPLPAVSGSPGAAITPLPSTQ). In terms of domain architecture, SH3 2 spans 235–296 (NGPVFAKAIQ…PFTHVKIFDP (62 aa)).

This sequence belongs to the CRK family. In terms of assembly, interacts with tyrosine-phosphorylated EPOR and INPP5D/SHIP1. Interacts with DOCK2 and DOCK5 via its first SH3 domain. Interacts with phosphorylated CBLB and IRS4. Interacts with BCAR1/CAS and NEDD9/HEF1.

May mediate the transduction of intracellular signals. In Homo sapiens (Human), this protein is Crk-like protein (CRKL).